The following is a 487-amino-acid chain: Histamine H1 receptor (487 aa).

The Extracellular segment spans residues 1–29 (MSLPNSSCLLEDKMCEGNKTTMASPQLMP). Residues asparagine 5 and asparagine 18 are each glycosylated (N-linked (GlcNAc...) asparagine). A helical membrane pass occupies residues 30-50 (LVVVLSTISLVTVGLNLLVLY). Topologically, residues 51–64 (AVRSERKLHTVGNL) are cytoplasmic. A helical membrane pass occupies residues 65 to 89 (YIVSLSVADLIVGAVVMPMNILYLL). The Extracellular segment spans residues 90–97 (MSKWSLGR). Residues 98–123 (PLCLFWLSMDYVASTASIFSVFILCI) form a helical membrane-spanning segment. A disulfide bond links cysteine 100 and cysteine 180. Histamine is bound by residues aspartate 107 and threonine 112. The tract at residues 107 to 112 (DYVAST) is important for agonist binding. The Cytoplasmic segment spans residues 124–144 (DRYRSVQQPLRYLKYRTKTRA). Residues threonine 140 and threonine 142 each carry the phosphothreonine modification. The helical transmembrane segment at 145–164 (SATILGAWFLSFLWVIPILG) threads the bilayer. Residues 165–188 (WNHFRQQISVRREDKCETDFYDVT) are Extracellular-facing. Residues 189 to 211 (WFKVMTAIINFYLPTLLMLWFYA) form a helical membrane-spanning segment. Histamine is bound at residue asparagine 198. Topologically, residues 212–416 (KIYKAVQKHC…MNRERKAAKQ (205 aa)) are cytoplasmic. A Phosphoserine modification is found at serine 230. A compositionally biased stretch (basic and acidic residues) spans 238-261 (KLRPENPKGDAKKPGKESPWEVLK). Residues 238 to 286 (KLRPENPKGDAKKPGKESPWEVLKRKPKDAGGGSVLKSPSQTPKEMKSP) form a disordered region. Position 279 is a phosphothreonine (threonine 279). Serine 344 and serine 347 each carry phosphoserine. The segment at 345 to 379 (EISEDQMLGDSQSFSRTDSDTTTETAPGKGKLRSG) is disordered. The segment covering 353 to 369 (GDSQSFSRTDSDTTTET) has biased composition (polar residues). Serine 380, serine 396, and serine 398 each carry phosphoserine. A helical membrane pass occupies residues 417–440 (LGFIMAAFILCWIPYFIFFMVIAF). An important for agonist binding region spans residues 424-428 (FILCW). Tyrosine 431 contacts histamine. Cysteines 441 and 444 form a disulfide. Residues 441-446 (CKNCCN) lie on the Extracellular side of the membrane. Residues 447 to 469 (EHLHMFTIWLGYINSTLNPLIYP) form a helical membrane-spanning segment. Over 470–487 (LCNENFKKTFKRILHIRS) the chain is Cytoplasmic.

Belongs to the G-protein coupled receptor 1 family. Post-translationally, phosphorylation at sites in the second and third cytoplasmic loops independently contribute to agonist-induced receptor down-regulation.

The protein localises to the cell membrane. Its function is as follows. G-protein-coupled receptor for histamine, a biogenic amine that functions as an immune modulator and a neurotransmitter. Through the H1 receptor, histamine mediates the contraction of smooth muscles and increases capillary permeability due to contraction of terminal venules. Also mediates neurotransmission in the central nervous system and thereby regulates circadian rhythms, emotional and locomotor activities as well as cognitive functions. This is Histamine H1 receptor from Pongo pygmaeus (Bornean orangutan).